Consider the following 457-residue polypeptide: Argininosuccinate lyase (457 aa).

This sequence belongs to the lyase 1 family. Argininosuccinate lyase subfamily.

The protein resides in the cytoplasm. It catalyses the reaction 2-(N(omega)-L-arginino)succinate = fumarate + L-arginine. It functions in the pathway amino-acid biosynthesis; L-arginine biosynthesis; L-arginine from L-ornithine and carbamoyl phosphate: step 3/3. This is Argininosuccinate lyase from Shigella flexneri serotype 5b (strain 8401).